The primary structure comprises 319 residues: Annexin A4 (319 aa).

A Phosphothreonine modification is found at T7. Residue S12 is modified to Phosphoserine. 4 Annexin repeats span residues 14-85 (FNAT…GLMT), 86-157 (PTVL…SLSA), 169-241 (ALMK…AIVK), and 245-316 (SKPS…VLCG). N6-acetyllysine occurs at positions 213, 293, and 300.

Belongs to the annexin family.

The protein resides in the zymogen granule membrane. Calcium/phospholipid-binding protein which promotes membrane fusion and is involved in exocytosis. In Mus musculus (Mouse), this protein is Annexin A4 (Anxa4).